A 364-amino-acid polypeptide reads, in one-letter code: Aminomethyltransferase (364 aa).

The protein belongs to the GcvT family. In terms of assembly, the glycine cleavage system is composed of four proteins: P, T, L and H.

It catalyses the reaction N(6)-[(R)-S(8)-aminomethyldihydrolipoyl]-L-lysyl-[protein] + (6S)-5,6,7,8-tetrahydrofolate = N(6)-[(R)-dihydrolipoyl]-L-lysyl-[protein] + (6R)-5,10-methylene-5,6,7,8-tetrahydrofolate + NH4(+). Functionally, the glycine cleavage system catalyzes the degradation of glycine. This is Aminomethyltransferase from Shewanella sediminis (strain HAW-EB3).